The primary structure comprises 135 residues: Ribosome-binding factor A (135 aa).

It belongs to the RbfA family. In terms of assembly, monomer. Binds 30S ribosomal subunits, but not 50S ribosomal subunits or 70S ribosomes.

It localises to the cytoplasm. Functionally, one of several proteins that assist in the late maturation steps of the functional core of the 30S ribosomal subunit. Associates with free 30S ribosomal subunits (but not with 30S subunits that are part of 70S ribosomes or polysomes). Required for efficient processing of 16S rRNA. May interact with the 5'-terminal helix region of 16S rRNA. This is Ribosome-binding factor A from Bartonella quintana (strain Toulouse) (Rochalimaea quintana).